We begin with the raw amino-acid sequence, 392 residues long: Chaperone protein DnaJ (392 aa).

The J domain occupies 2–67 (DYYDVLGVSK…QKRESYDRYG (66 aa)). Residues 149–227 (GVEKELLVSG…CRGQGRIKDK (79 aa)) form a CR-type zinc finger. Cysteine 162, cysteine 165, cysteine 179, cysteine 182, cysteine 201, cysteine 204, cysteine 215, and cysteine 218 together coordinate Zn(2+). 4 CXXCXGXG motif repeats span residues 162–169 (CETCLGSG), 179–186 (CDRCKGSG), 201–208 (CPECGGEG), and 215–222 (CSNCRGQG).

Belongs to the DnaJ family. Homodimer. The cofactor is Zn(2+).

The protein localises to the cytoplasm. Participates actively in the response to hyperosmotic and heat shock by preventing the aggregation of stress-denatured proteins and by disaggregating proteins, also in an autonomous, DnaK-independent fashion. Unfolded proteins bind initially to DnaJ; upon interaction with the DnaJ-bound protein, DnaK hydrolyzes its bound ATP, resulting in the formation of a stable complex. GrpE releases ADP from DnaK; ATP binding to DnaK triggers the release of the substrate protein, thus completing the reaction cycle. Several rounds of ATP-dependent interactions between DnaJ, DnaK and GrpE are required for fully efficient folding. Also involved, together with DnaK and GrpE, in the DNA replication of plasmids through activation of initiation proteins. This Chlamydia caviae (strain ATCC VR-813 / DSM 19441 / 03DC25 / GPIC) (Chlamydophila caviae) protein is Chaperone protein DnaJ.